The following is a 269-amino-acid chain: Triosephosphate isomerase (269 aa).

A substrate-binding site is contributed by 8-10 (NWK). The active-site Electrophile is the H105. The active-site Proton acceptor is E183. Substrate contacts are provided by residues G189, S227, and 248 to 249 (GG).

Belongs to the triosephosphate isomerase family. Homodimer.

The protein resides in the cytoplasm. It catalyses the reaction D-glyceraldehyde 3-phosphate = dihydroxyacetone phosphate. It functions in the pathway carbohydrate biosynthesis; gluconeogenesis. The protein operates within carbohydrate degradation; glycolysis; D-glyceraldehyde 3-phosphate from glycerone phosphate: step 1/1. Involved in the gluconeogenesis. Catalyzes stereospecifically the conversion of dihydroxyacetone phosphate (DHAP) to D-glyceraldehyde-3-phosphate (G3P). The polypeptide is Triosephosphate isomerase (Psychrobacter arcticus (strain DSM 17307 / VKM B-2377 / 273-4)).